The sequence spans 141 residues: Large ribosomal subunit protein uL16 (141 aa).

Residues 1–17 (MLMPKRTKFRKQMKGRN) are compositionally biased toward basic residues. Positions 1–22 (MLMPKRTKFRKQMKGRNRGYAT) are disordered.

The protein belongs to the universal ribosomal protein uL16 family. As to quaternary structure, part of the 50S ribosomal subunit.

Binds 23S rRNA and is also seen to make contacts with the A and possibly P site tRNAs. This chain is Large ribosomal subunit protein uL16, found in Campylobacter curvus (strain 525.92).